The chain runs to 156 residues: Snaclec A14 (156 aa).

The N-terminal stretch at M1 to A23 is a signal peptide. 3 disulfides stabilise this stretch: C27–C38, C55–C152, and C127–C144. Residues Y34 to K153 form the C-type lectin domain. Residue N141 is glycosylated (N-linked (GlcNAc...) asparagine).

The protein belongs to the snaclec family. As to quaternary structure, heterodimer; disulfide-linked. As to expression, expressed by the venom gland.

The protein localises to the secreted. Functionally, interferes with one step of hemostasis (modulation of platelet aggregation, or coagulation cascade, for example). The chain is Snaclec A14 from Macrovipera lebetinus (Levantine viper).